Reading from the N-terminus, the 475-residue chain is tRNA modification GTPase MnmE (475 aa).

Residues Arg32, Glu97, and Lys136 each coordinate (6S)-5-formyl-5,6,7,8-tetrahydrofolate. Positions 232-396 (GVATVIAGRP…LKSRMSSMVE (165 aa)) constitute a TrmE-type G domain. GTP is bound by residues 242 to 247 (NAGKST), 261 to 267 (SHMPGTT), 286 to 289 (DTAG), and 377 to 379 (SAR). The Mg(2+) site is built by Ser246 and Thr267. Residue Lys475 participates in (6S)-5-formyl-5,6,7,8-tetrahydrofolate binding.

Belongs to the TRAFAC class TrmE-Era-EngA-EngB-Septin-like GTPase superfamily. TrmE GTPase family. Homodimer. Heterotetramer of two MnmE and two MnmG subunits. It depends on K(+) as a cofactor.

It localises to the cytoplasm. Exhibits a very high intrinsic GTPase hydrolysis rate. Involved in the addition of a carboxymethylaminomethyl (cmnm) group at the wobble position (U34) of certain tRNAs, forming tRNA-cmnm(5)s(2)U34. The sequence is that of tRNA modification GTPase MnmE from Chlorobium phaeobacteroides (strain DSM 266 / SMG 266 / 2430).